We begin with the raw amino-acid sequence, 285 residues long: Nucleotide-binding protein Cphy_0331 (285 aa).

8-15 is an ATP binding site; that stretch reads GMSGAGKS. 59-62 contributes to the GTP binding site; sequence DIRS.

The protein belongs to the RapZ-like family.

Its function is as follows. Displays ATPase and GTPase activities. The chain is Nucleotide-binding protein Cphy_0331 from Lachnoclostridium phytofermentans (strain ATCC 700394 / DSM 18823 / ISDg) (Clostridium phytofermentans).